Here is a 175-residue protein sequence, read N- to C-terminus: Methylated-DNA--protein-cysteine methyltransferase (175 aa).

The Nucleophile; methyl group acceptor role is filled by cysteine 142.

It belongs to the MGMT family.

It is found in the cytoplasm. It carries out the reaction a 6-O-methyl-2'-deoxyguanosine in DNA + L-cysteinyl-[protein] = S-methyl-L-cysteinyl-[protein] + a 2'-deoxyguanosine in DNA. The enzyme catalyses a 4-O-methyl-thymidine in DNA + L-cysteinyl-[protein] = a thymidine in DNA + S-methyl-L-cysteinyl-[protein]. Its function is as follows. Involved in the cellular defense against the biological effects of O6-methylguanine (O6-MeG) and O4-methylthymine (O4-MeT) in DNA. Repairs the methylated nucleobase in DNA by stoichiometrically transferring the methyl group to a cysteine residue in the enzyme. This is a suicide reaction: the enzyme is irreversibly inactivated. The protein is Methylated-DNA--protein-cysteine methyltransferase of Thermococcus barophilus (strain DSM 11836 / MP).